A 679-amino-acid chain; its full sequence is TBC1 domain family member 23 (679 aa).

One can recognise a Rab-GAP TBC domain in the interval 38 to 219 (QLPADLRAKV…AIWDGYLQQA (182 aa)). A Rhodanese domain is found at 327-439 (EGVRFFVVDC…LQQHLADINV (113 aa)). Residues 454 to 468 (SGSRSSINSSVDGDS) show a composition bias toward low complexity. A disordered region spans residues 454–478 (SGSRSSINSSVDGDSPNGSSDGKGV).

The protein resides in the golgi apparatus. It localises to the trans-Golgi network. Putative Rab GTPase-activating protein which plays a role in vesicular trafficking. Involved in endosome-to-Golgi trafficking. Acts as a bridging protein by binding simultaneously to golgins, located at the trans-Golgi, and to the WASH complex, located on endosome-derived vesicles. Plays a role in brain development. May act as a general inhibitor of innate immunity signaling. In Gallus gallus (Chicken), this protein is TBC1 domain family member 23 (TBC1D23).